The sequence spans 954 residues: Alpha-xylosidase BoGH31A (954 aa).

A signal peptide spans 1–20 (MIMNMKNIFYCLLPGLLLGA). The N-palmitoyl cysteine moiety is linked to residue cysteine 21. A lipid anchor (S-diacylglycerol cysteine) is attached at cysteine 21. The region spanning 227–366 (TGQEGALTGT…NPEEQGKQSW (140 aa)) is the PA14 domain. Active-site residues include aspartate 553 and glutamate 556. Aspartate 630 serves as the catalytic Proton donor.

The protein belongs to the glycosyl hydrolase 31 family.

Its subcellular location is the cell inner membrane. The enzyme catalyses Hydrolysis of terminal, non-reducing alpha-D-xylose residues with release of alpha-D-xylose.. Its pathway is glucan metabolism; xyloglucan degradation. In terms of biological role, catalyzes the liberation of alpha-xylose from the non-reducing terminal glucose of xyloglucan oligosaccharides in xyloglucan degradation, converting the 'X' to 'G' units. The polypeptide is Alpha-xylosidase BoGH31A (Bacteroides ovatus (strain ATCC 8483 / DSM 1896 / JCM 5824 / BCRC 10623 / CCUG 4943 / NCTC 11153)).